A 359-amino-acid chain; its full sequence is Probable C-C chemokine receptor type 3 (359 aa).

Residues 1–38 (MAFNTDEIKTVVESFETTPYEYEWAPPCEKVRIKELGS) lie on the Extracellular side of the membrane. The chain crosses the membrane as a helical span at residues 39–64 (WLLPPLYSLVFIIGLLGNMMVVLILI). Residues 65-68 (KYRK) lie on the Cytoplasmic side of the membrane. The helical transmembrane segment at 69–95 (LQIMTNIYLFNLAISDLLFLFTVPFWI) threads the bilayer. Residues 96–111 (HYVLWNEWGFGHYMCK) lie on the Extracellular side of the membrane. Cysteines 110 and 187 form a disulfide. A helical membrane pass occupies residues 112–133 (MLSGFYYLALYSEIFFIILLTI). Topologically, residues 134 to 150 (DRYLAIVHAVFALRART) are cytoplasmic. The chain crosses the membrane as a helical span at residues 151 to 175 (VTFATITSIITWGLAGLAALPEFIF). At 176 to 201 (HESQDSFGEFSCSPRYPEGEEDSWKR) the chain is on the extracellular side. Residues 202–227 (FHALRMNIFGLALPLLIMVICYSGII) form a helical membrane-spanning segment. Over 228-243 (KTLLRCPNKKKHKAIR) the chain is Cytoplasmic. A helical transmembrane segment spans residues 244–268 (LIFVVMIVFFIFWTPYNLVLLFSAF). Over 269–285 (HSTFLETSCQQSKHLDL) the chain is Extracellular. Residues 286 to 309 (AMQVTEVIAYTHCCINPVIYAFVG) form a helical membrane-spanning segment. The Cytoplasmic segment spans residues 310–359 (ERFRKHLRLFFHRNVAVYLGKYIPFLPGEKMERTSSVSPSTGEQEISVVF).

The protein belongs to the G-protein coupled receptor 1 family. As to expression, detected in skeletal muscle and in trace amounts in leukocytes.

The protein localises to the cell membrane. Receptor for C-C type chemokine. Binds and responds to a variety of chemokines, including CCL11, CCL26, CCL7, CCL13, RANTES(CCL5) and CCL15. Subsequently transduces a signal by increasing the intracellular calcium ions level. In addition acts as a possible functional receptor for NARS1. The protein is Probable C-C chemokine receptor type 3 (Ccr3) of Mus musculus (Mouse).